The primary structure comprises 365 residues: tRNA N6-adenosine threonylcarbamoyltransferase (365 aa).

Fe cation contacts are provided by H119 and H123. Residues 141–145 (LVSGG), D174, G187, and N289 each bind substrate. D317 contributes to the Fe cation binding site. The interval 342-365 (ARPRWPLDSKSPAMLGSGKKGAKA) is disordered.

Belongs to the KAE1 / TsaD family. The cofactor is Fe(2+).

The protein resides in the cytoplasm. It catalyses the reaction L-threonylcarbamoyladenylate + adenosine(37) in tRNA = N(6)-L-threonylcarbamoyladenosine(37) in tRNA + AMP + H(+). Required for the formation of a threonylcarbamoyl group on adenosine at position 37 (t(6)A37) in tRNAs that read codons beginning with adenine. Is involved in the transfer of the threonylcarbamoyl moiety of threonylcarbamoyl-AMP (TC-AMP) to the N6 group of A37, together with TsaE and TsaB. TsaD likely plays a direct catalytic role in this reaction. This Roseobacter denitrificans (strain ATCC 33942 / OCh 114) (Erythrobacter sp. (strain OCh 114)) protein is tRNA N6-adenosine threonylcarbamoyltransferase.